We begin with the raw amino-acid sequence, 360 residues long: Phospho-N-acetylmuramoyl-pentapeptide-transferase (360 aa).

10 helical membrane passes run 25–45 (RAIL…PWVI), 74–94 (MGGA…SDFG), 97–117 (YVWV…VDDY), 134–154 (YFWQ…TAQA), 168–188 (VALN…VGTS), 199–219 (GLAI…AYLA), 236–256 (AGEL…FLWF), 263–283 (VFMG…VAVI), 288–308 (FVLF…ILQV), and 339–359 (IVRF…TLKF).

The protein belongs to the glycosyltransferase 4 family. MraY subfamily. Requires Mg(2+) as cofactor.

It is found in the cell inner membrane. It carries out the reaction UDP-N-acetyl-alpha-D-muramoyl-L-alanyl-gamma-D-glutamyl-meso-2,6-diaminopimeloyl-D-alanyl-D-alanine + di-trans,octa-cis-undecaprenyl phosphate = di-trans,octa-cis-undecaprenyl diphospho-N-acetyl-alpha-D-muramoyl-L-alanyl-D-glutamyl-meso-2,6-diaminopimeloyl-D-alanyl-D-alanine + UMP. The protein operates within cell wall biogenesis; peptidoglycan biosynthesis. Its function is as follows. Catalyzes the initial step of the lipid cycle reactions in the biosynthesis of the cell wall peptidoglycan: transfers peptidoglycan precursor phospho-MurNAc-pentapeptide from UDP-MurNAc-pentapeptide onto the lipid carrier undecaprenyl phosphate, yielding undecaprenyl-pyrophosphoryl-MurNAc-pentapeptide, known as lipid I. The protein is Phospho-N-acetylmuramoyl-pentapeptide-transferase of Cellvibrio japonicus (strain Ueda107) (Pseudomonas fluorescens subsp. cellulosa).